The chain runs to 66 residues: Small vasohibin-binding protein (66 aa).

The segment covering M1 to K23 has biased composition (basic and acidic residues). Positions M1–L31 are disordered. Residues A5–Q52 are a coiled coil.

This sequence belongs to the SVBP family. As to quaternary structure, interacts with VASH1 and VASH2.

It is found in the cytoplasm. Its subcellular location is the secreted. The protein resides in the cytoskeleton. Enhances the tyrosine carboxypeptidase activity of VASH1 and VASH2, thereby promoting the removal of the C-terminal tyrosine residue of alpha-tubulin. This activity is critical for spindle function and accurate chromosome segregation during mitosis since microtubule detyronisation regulates mitotic spindle length and postioning. Also required to enhance the solubility and secretion of VASH1 and VASH2. Plays a role in axon and excitatory synapse formation. The sequence is that of Small vasohibin-binding protein from Homo sapiens (Human).